Here is a 225-residue protein sequence, read N- to C-terminus: Ribonuclease 3 (225 aa).

The RNase III domain maps to 5 to 127 (LDRLQRSLGH…VFAATFLDQG (123 aa)). E40 provides a ligand contact to Mg(2+). D44 is an active-site residue. Mg(2+) is bound by residues D113 and E116. E116 is a catalytic residue. Positions 154–224 (DPKTALQELL…AELALAQLRK (71 aa)) constitute a DRBM domain.

This sequence belongs to the ribonuclease III family. In terms of assembly, homodimer. Requires Mg(2+) as cofactor.

Its subcellular location is the cytoplasm. The enzyme catalyses Endonucleolytic cleavage to 5'-phosphomonoester.. Digests double-stranded RNA. Involved in the processing of primary rRNA transcript to yield the immediate precursors to the large and small rRNAs (23S and 16S). Processes some mRNAs, and tRNAs when they are encoded in the rRNA operon. Processes pre-crRNA and tracrRNA of type II CRISPR loci if present in the organism. This Aromatoleum aromaticum (strain DSM 19018 / LMG 30748 / EbN1) (Azoarcus sp. (strain EbN1)) protein is Ribonuclease 3.